A 374-amino-acid polypeptide reads, in one-letter code: MTQNHYTTSIFANCSKHYEFEILLETCTNSTNPCHAVSQIQSAITIAYVDYYTSVALFSIAALLDIYCLIITIPLYRRMKDDSKKKYVFLITRCISGLLLVVAWLLIQCIYLRFIAPSQDNLPYYVLALALNIGSTYVLLGSYVGMAGILYLGVLNPIAFNQHLTLRIVYIAVCIIFVISIFISIPLAIFQALMTVPTSSMSCTDTACAPLITLINFVLVFGSLITTTLTLTFVLISLCRHRKEFKKLDTTSNTSLNSAVRLLKFTLFAVLLLVAAEVIPFVISETKKKHSVVTGCYYFYHSGKVIQYAVFALTESSIWSIALIIDPLINIIFDRTVSKKATDQVKWMRKSCVGLVRKVTKRSNPENFTETSEI.

The Extracellular segment spans residues 1–54; that stretch reads MTQNHYTTSIFANCSKHYEFEILLETCTNSTNPCHAVSQIQSAITIAYVDYYTS. Residues 55-75 form a helical membrane-spanning segment; sequence VALFSIAALLDIYCLIITIPL. At 76-86 the chain is on the cytoplasmic side; the sequence is YRRMKDDSKKK. A helical transmembrane segment spans residues 87-107; the sequence is YVFLITRCISGLLLVVAWLLI. Over 108-137 the chain is Extracellular; that stretch reads QCIYLRFIAPSQDNLPYYVLALALNIGSTY. A helical transmembrane segment spans residues 138–158; it reads VLLGSYVGMAGILYLGVLNPI. Residues 159 to 169 lie on the Cytoplasmic side of the membrane; it reads AFNQHLTLRIV. Residues 170–190 traverse the membrane as a helical segment; sequence YIAVCIIFVISIFISIPLAIF. Topologically, residues 191–216 are extracellular; it reads QALMTVPTSSMSCTDTACAPLITLIN. The chain crosses the membrane as a helical span at residues 217 to 237; the sequence is FVLVFGSLITTTLTLTFVLIS. The Cytoplasmic portion of the chain corresponds to 238–262; the sequence is LCRHRKEFKKLDTTSNTSLNSAVRL. Residues 263 to 283 traverse the membrane as a helical segment; sequence LKFTLFAVLLLVAAEVIPFVI. Over 284–304 the chain is Extracellular; that stretch reads SETKKKHSVVTGCYYFYHSGK. The chain crosses the membrane as a helical span at residues 305–325; sequence VIQYAVFALTESSIWSIALII. At 326–374 the chain is on the cytoplasmic side; the sequence is DPLINIIFDRTVSKKATDQVKWMRKSCVGLVRKVTKRSNPENFTETSEI.

It belongs to the G-protein coupled receptor 1 family. B0244 subfamily.

The protein localises to the cell membrane. The polypeptide is Putative G-protein coupled receptor-like protein B0244.6 (Caenorhabditis elegans).